A 103-amino-acid chain; its full sequence is Large ribosomal subunit protein bL21 (103 aa).

This sequence belongs to the bacterial ribosomal protein bL21 family. As to quaternary structure, part of the 50S ribosomal subunit. Contacts protein L20.

This protein binds to 23S rRNA in the presence of protein L20. The protein is Large ribosomal subunit protein bL21 of Caldicellulosiruptor saccharolyticus (strain ATCC 43494 / DSM 8903 / Tp8T 6331).